We begin with the raw amino-acid sequence, 115 residues long: Con-Ins T2 (115 aa).

The N-terminal stretch at 1–21 (MTTSFYFLLVALGLLLYVCQS) is a signal peptide. The propeptide occupies 22 to 29 (SFGNQHTR). 3 disulfides stabilise this stretch: C38-C101, C50-C114, and C100-C105. E48 is subject to 4-carboxyglutamate. Positions 53-94 (KRNDAGKKRGQASPLWQRGGSLSMLKARAKRNEAFHLQRAHR) are cleaved as a propeptide — c peptide. E98 bears the 4-carboxyglutamate mark. Position 109 is a 4-carboxyglutamate (E109). At C114 the chain carries Cysteine amide.

It belongs to the insulin family. As to quaternary structure, heterodimer of A and B chains; disulfide-linked. Expressed by the venom gland.

The protein resides in the secreted. Its function is as follows. This venom insulin facilitates prey capture by rapidly inducing hypoglycemic shock. It is one of the smallest known insulin found in nature and lacks the C-terminal segment of the B chain that, in human insulin, mediates engagement of the insulin receptor (INSR) and assembly of the hormone's hexameric storage form. Despite lacking this segment, it both binds and activates human insulin receptor (long isoform (HIR-B)) with a high potency (EC(50)=15.5 nM). In vivo, intraperitoneal injection of this peptide into zebrafish lowers blood glucose with a lower potency than human insulin. In addition, when applied to water, this peptide reduces overall locomotor activity of zebrafish larvae, observed as a significant decrease in the percentage of time spent swimming and movement frequency. When tested on a mouse model of diabetes, this insulin also lowers blood glucose with a 10-fold lower potency than human insulin. In Conus tulipa (Fish-hunting cone snail), this protein is Con-Ins T2.